Consider the following 247-residue polypeptide: MKFFQEKISIKETNILLKVDNPKFFKMAKNTIINERLNLENYIFRNPIFLTSYSPVEVPDNVPEIVKLMAEAGFNADVGPMAAVAGTFSQLIVENLIENDCKNAISENGGDICLKCENDTTVGLYAGNSSLSGNLGFKLKKEKMKNGYGICTSSGTVGHSVSLGNADSVTVFSKSAIIADAAATSIGNFAVGIAVDAINNCLEKAENISKIDGVFVVIGEHAGKIGKIPQLIKTDKKEVLGNVFELV.

It belongs to the UPF0280 family.

The polypeptide is UPF0280 protein MmarC6_1437 (Methanococcus maripaludis (strain C6 / ATCC BAA-1332)).